A 400-amino-acid chain; its full sequence is Elongation factor Tu (400 aa).

A tr-type G domain is found at 10-209 (KPHVNIGTIG…NVDAYIPTPE (200 aa)). The segment at 19–26 (GHVDHGKT) is G1. Residue 19-26 (GHVDHGKT) participates in GTP binding. Residue Thr-26 coordinates Mg(2+). The tract at residues 60-64 (GITIN) is G2. A G3 region spans residues 81–84 (DCPG). GTP is bound by residues 81–85 (DCPGH) and 136–139 (NKSD). Residues 136 to 139 (NKSD) are G4. The interval 174–176 (SGL) is G5.

The protein belongs to the TRAFAC class translation factor GTPase superfamily. Classic translation factor GTPase family. EF-Tu/EF-1A subfamily. Monomer.

It localises to the cytoplasm. It carries out the reaction GTP + H2O = GDP + phosphate + H(+). Its function is as follows. GTP hydrolase that promotes the GTP-dependent binding of aminoacyl-tRNA to the A-site of ribosomes during protein biosynthesis. The polypeptide is Elongation factor Tu (Desulforamulus reducens (strain ATCC BAA-1160 / DSM 100696 / MI-1) (Desulfotomaculum reducens)).